Here is a 101-residue protein sequence, read N- to C-terminus: uncharacterized protein (101 aa).

Its function is as follows. May regulate the expression of phage structural components with protein P13. This is an uncharacterized protein from Pseudoalteromonas phage PM2 (Bacteriophage PM2).